The sequence spans 216 residues: DPLRAKFIAENFLEDAVCFNEVRNMFGYTGTYKGERISVMGTGMGMPSISIYARELIVDYGVKKLIRVGTAGSLNENVHVRELVLAQAAATNSNIIRNDWPQYDFPQIASFNLLDKAYHIAKNFGMTTHVGNVLSSDEKYSNYFEKNIELGKWGVKAVEMEAAALYYLAAQHQVDALAIMTISDSLVNPDEDTTAEERQNTFTDMMKVGLETLIAD.

Phosphate-binding positions include R4, R23, and R67–T70. A purine D-ribonucleoside-binding positions include E159–E161 and S183–D184. Residue D184 is the Proton donor of the active site.

The protein belongs to the PNP/UDP phosphorylase family. As to quaternary structure, homohexamer; trimer of homodimers.

It catalyses the reaction a purine D-ribonucleoside + phosphate = a purine nucleobase + alpha-D-ribose 1-phosphate. The enzyme catalyses a purine 2'-deoxy-D-ribonucleoside + phosphate = a purine nucleobase + 2-deoxy-alpha-D-ribose 1-phosphate. In terms of biological role, catalyzes the reversible phosphorolytic breakdown of the N-glycosidic bond in the beta-(deoxy)ribonucleoside molecules, with the formation of the corresponding free purine bases and pentose-1-phosphate. This is Purine nucleoside phosphorylase DeoD-type from Streptococcus thermophilus.